Reading from the N-terminus, the 263-residue chain is Endonuclease 8 (263 aa).

Pro-2 acts as the Schiff-base intermediate with DNA in catalysis. Glu-3 acts as the Proton donor in catalysis. The Proton donor; for beta-elimination activity role is filled by Lys-53. Residues Gln-70, Arg-125, and Asn-169 each contribute to the DNA site. The FPG-type zinc finger occupies 229–263; it reads KVFHRDGESCERCGGIIERTMLSSRPFYWCPHCQR. Arg-253 acts as the Proton donor; for delta-elimination activity in catalysis.

It belongs to the FPG family. Zn(2+) is required as a cofactor.

The enzyme catalyses 2'-deoxyribonucleotide-(2'-deoxyribose 5'-phosphate)-2'-deoxyribonucleotide-DNA = a 3'-end 2'-deoxyribonucleotide-(2,3-dehydro-2,3-deoxyribose 5'-phosphate)-DNA + a 5'-end 5'-phospho-2'-deoxyribonucleoside-DNA + H(+). Its function is as follows. Involved in base excision repair of DNA damaged by oxidation or by mutagenic agents. Acts as a DNA glycosylase that recognizes and removes damaged bases. Has a preference for oxidized pyrimidines, such as thymine glycol, 5,6-dihydrouracil and 5,6-dihydrothymine. Has AP (apurinic/apyrimidinic) lyase activity and introduces nicks in the DNA strand. Cleaves the DNA backbone by beta-delta elimination to generate a single-strand break at the site of the removed base with both 3'- and 5'-phosphates. The chain is Endonuclease 8 from Pectobacterium carotovorum subsp. carotovorum (strain PC1).